Here is a 107-residue protein sequence, read N- to C-terminus: Translation initiation factor IF-1, chloroplastic (107 aa).

The S1-like domain occupies 8 to 83; it reads REKKNPREAK…SKGRIIYRLP (76 aa). Residues 81–107 form a disordered region; that stretch reads RLPHKDSKRTEDSKDTEDLKDTKDSKD. A compositionally biased stretch (basic and acidic residues) spans 83–107; that stretch reads PHKDSKRTEDSKDTEDLKDTKDSKD.

This sequence belongs to the IF-1 family. Component of the 30S ribosomal translation pre-initiation complex which assembles on the 30S ribosome in the order IF-2 and IF-3, IF-1 and N-formylmethionyl-tRNA(fMet); mRNA recruitment can occur at any time during PIC assembly.

The protein resides in the plastid. It localises to the chloroplast. One of the essential components for the initiation of protein synthesis. Stabilizes the binding of IF-2 and IF-3 on the 30S subunit to which N-formylmethionyl-tRNA(fMet) subsequently binds. Helps modulate mRNA selection, yielding the 30S pre-initiation complex (PIC). Upon addition of the 50S ribosomal subunit IF-1, IF-2 and IF-3 are released leaving the mature 70S translation initiation complex. The chain is Translation initiation factor IF-1, chloroplastic from Saccharum hybrid (Sugarcane).